A 797-amino-acid polypeptide reads, in one-letter code: Ribosome biogenesis protein BOP1 homolog (797 aa).

Disordered stretches follow at residues 22 to 112 and 149 to 177; these read LVPS…GGGP and SICANTKPRAGPDPGSDSSEDERPNRNTV. The span at 61–73 shows a compositional bias: low complexity; sequence AGAAAAAVEGTAA. A compositionally biased stretch (acidic residues) spans 74–87; the sequence is PEDEAADNSSEEDA. Positions 90-112 are enriched in gly residues; the sequence is GSHGEGAGEGGGSGTWPGNGGGP. 7 WD repeats span residues 462-502, 504-544, 581-623, 626-664, 667-706, 710-749, and 766-797; these read GHMG…CWRT, VLEG…EEAE, RLRF…SQNP, KNRGRVVRVAFHPTKPFFFVATQNHVRVYNLAKQALAKK, GGGGVLSCLALHPGGDHVLVGSDDKRVAWYDLDLSTKPYK, YHSAPPRAVAFHRSYPLFASAADDGTVQVFHGMVYADLLT, and TASEGVADCAFHPTQPWIFTAGADSKILLYCN.

Belongs to the WD repeat BOP1/ERB1 family.

It localises to the nucleus. The protein resides in the nucleolus. It is found in the nucleoplasm. Functionally, required for maturation of ribosomal RNAs and formation of the large ribosomal subunit. The chain is Ribosome biogenesis protein BOP1 homolog from Chlamydomonas reinhardtii (Chlamydomonas smithii).